The primary structure comprises 401 residues: Probable tRNA sulfurtransferase (401 aa).

One can recognise a THUMP domain in the interval 63-168; the sequence is TTAEQALSCL…EREAFLYGAR (106 aa). ATP-binding positions include 186 to 187, 211 to 212, arginine 268, glycine 290, and glutamine 299; these read LL and YF.

Belongs to the ThiI family.

Its subcellular location is the cytoplasm. It catalyses the reaction [ThiI sulfur-carrier protein]-S-sulfanyl-L-cysteine + a uridine in tRNA + 2 reduced [2Fe-2S]-[ferredoxin] + ATP + H(+) = [ThiI sulfur-carrier protein]-L-cysteine + a 4-thiouridine in tRNA + 2 oxidized [2Fe-2S]-[ferredoxin] + AMP + diphosphate. It carries out the reaction [ThiS sulfur-carrier protein]-C-terminal Gly-Gly-AMP + S-sulfanyl-L-cysteinyl-[cysteine desulfurase] + AH2 = [ThiS sulfur-carrier protein]-C-terminal-Gly-aminoethanethioate + L-cysteinyl-[cysteine desulfurase] + A + AMP + 2 H(+). It functions in the pathway cofactor biosynthesis; thiamine diphosphate biosynthesis. In terms of biological role, catalyzes the ATP-dependent transfer of a sulfur to tRNA to produce 4-thiouridine in position 8 of tRNAs, which functions as a near-UV photosensor. Also catalyzes the transfer of sulfur to the sulfur carrier protein ThiS, forming ThiS-thiocarboxylate. This is a step in the synthesis of thiazole, in the thiamine biosynthesis pathway. The sulfur is donated as persulfide by IscS. This Treponema pallidum subsp. pallidum (strain SS14) protein is Probable tRNA sulfurtransferase.